The following is an 874-amino-acid chain: Endothelial PAS domain-containing protein 1 (874 aa).

Positions 1-23 (MTADKEKKRSSSELRKEKSRDAA) are disordered. In terms of domain architecture, bHLH spans 14 to 67 (LRKEKSRDAARCRRSKETEVFYELAHELPLPHSVSSHLDKASIMRLAISFLRTH). A DNA-binding region spans residues 26–53 (RRSKETEVFYELAHELPLPHSVSSHLDK). The PAS 1 domain occupies 84–154 (DQQMDNLYLK…ENLTLKNGSG (71 aa)). Positions 171–192 (RMKCTVTNRGRTVNLKSATWKV) are required for heterodimer formation with ARNT. In terms of domain architecture, PAS 2 spans 230-300 (QHPSHMDIPL…KSHQNLCTKG (71 aa)). A PAC domain is found at 304–347 (SGQYRMLAKHGGYVWLETQGTVIYNPRNLQPQCIMCVNYVLSEI). P405 carries the 4-hydroxyproline modification. The segment at 438-489 (WVSGLRSHSAQSESGSLPAFTVPQADTPGNTTPSASSSSSCSTPSSPEDYYS) is disordered. Residues 443–452 (RSHSAQSESG) show a composition bias toward polar residues. The segment covering 464–484 (TPGNTTPSASSSSSCSTPSSP) has biased composition (low complexity). Residues 495-541 (LKIEVIEKLFAMDTEPRDPGSTQTDFSELDLETLAPYIPMDGEDFQL) form an NTAD region. P530 carries the post-translational modification 4-hydroxyproline. The interval 777-803 (LGQPLRHLPPPQPPSTRSSGENAKTGF) is disordered. Residues 834–874 (SFEPYLLPELTRYDCEVNVPVPGSSTLLQGRDLLRALDQAT) are CTAD. Residue T844 is modified to Phosphothreonine. The residue at position 851 (N851) is a (3S)-3-hydroxyasparagine.

Interacts with HIF3A isoform 2. Efficient DNA binding requires dimerization with another bHLH protein. Heterodimerizes with ARNT; heterodimer binds to core DNA sequence 5'-TACGTG-3' within the hypoxia response element (HRE) of target gene promoters. Interacts with CREBBP. Interacts with EGLN1. Interacts with VHL. In terms of processing, in normoxia, is probably hydroxylated on Pro-405 and Pro-530 by EGLN1/PHD1, EGLN2/PHD2 and/or EGLN3/PHD3. The hydroxylated prolines promote interaction with VHL, initiating rapid ubiquitination and subsequent proteasomal degradation. Under hypoxia, proline hydroxylation is impaired and ubiquitination is attenuated, resulting in stabilization. In normoxia, is hydroxylated on Asn-851 by HIF1AN thus probably abrogating interaction with CREBBP and EP300 and preventing transcriptional activation. Post-translationally, phosphorylated on multiple sites in the CTAD. In terms of processing, the iron and 2-oxoglutarate dependent 3-hydroxylation of asparagine is (S) stereospecific within HIF CTAD domains. In terms of tissue distribution, expressed in most tissues, with highest levels in lung, followed by heart, kidney, brain and liver. Predominantly expressed in endothelial cells. Also found in smooth muscle cells of the uterus, neurons, and brown adipose tissue. High expression in embryonic choroid plexus and kidney glomeruli.

It is found in the nucleus. The protein resides in the nucleus speckle. Transcription factor involved in the induction of oxygen regulated genes. Heterodimerizes with ARNT; heterodimer binds to core DNA sequence 5'-TACGTG-3' within the hypoxia response element (HRE) of target gene promoters. Regulates the vascular endothelial growth factor (VEGF) expression and seems to be implicated in the development of blood vessels and the tubular system of lung. May also play a role in the formation of the endothelium that gives rise to the blood brain barrier. Potent activator of the Tie-2 tyrosine kinase expression. Activation requires recruitment of transcriptional coactivators such as CREBBP and probably EP300. Interaction with redox regulatory protein APEX seems to activate CTAD. This chain is Endothelial PAS domain-containing protein 1 (Epas1), found in Mus musculus (Mouse).